A 691-amino-acid polypeptide reads, in one-letter code: Elongation factor G (691 aa).

A tr-type G domain is found at 12 to 286 (KKLRNIGIMA…GILEYLPSPL (275 aa)). GTP-binding positions include 21 to 28 (AHIDAGKT), 85 to 89 (DTPGH), and 139 to 142 (NKMD).

It belongs to the TRAFAC class translation factor GTPase superfamily. Classic translation factor GTPase family. EF-G/EF-2 subfamily.

It localises to the cytoplasm. Catalyzes the GTP-dependent ribosomal translocation step during translation elongation. During this step, the ribosome changes from the pre-translocational (PRE) to the post-translocational (POST) state as the newly formed A-site-bound peptidyl-tRNA and P-site-bound deacylated tRNA move to the P and E sites, respectively. Catalyzes the coordinated movement of the two tRNA molecules, the mRNA and conformational changes in the ribosome. This chain is Elongation factor G, found in Thermosipho africanus (strain TCF52B).